A 234-amino-acid polypeptide reads, in one-letter code: Purine nucleoside phosphorylase DeoD-type (234 aa).

His5 provides a ligand contact to a purine D-ribonucleoside. Residues Gly21, Arg25, Arg44, and 88-91 (RVGT) each bind phosphate. A purine D-ribonucleoside is bound by residues 178–180 (EME) and 202–203 (SD). The Proton donor role is filled by Asp203.

It belongs to the PNP/UDP phosphorylase family. As to quaternary structure, homohexamer; trimer of homodimers.

The catalysed reaction is a purine D-ribonucleoside + phosphate = a purine nucleobase + alpha-D-ribose 1-phosphate. It carries out the reaction a purine 2'-deoxy-D-ribonucleoside + phosphate = a purine nucleobase + 2-deoxy-alpha-D-ribose 1-phosphate. Its function is as follows. Catalyzes the reversible phosphorolytic breakdown of the N-glycosidic bond in the beta-(deoxy)ribonucleoside molecules, with the formation of the corresponding free purine bases and pentose-1-phosphate. The chain is Purine nucleoside phosphorylase DeoD-type from Lactococcus lactis subsp. cremoris (strain MG1363).